The following is a 319-amino-acid chain: ATP-dependent 6-phosphofructokinase (319 aa).

Residue glycine 11 coordinates ATP. Residue 21–25 (RAVVR) participates in ADP binding. Residues 72–73 (RC) and 102–105 (GDGS) each bind ATP. Mg(2+) is bound at residue aspartate 103. A substrate-binding site is contributed by 125 to 127 (TID). The Proton acceptor role is filled by aspartate 127. Arginine 154 contacts ADP. 169–171 (MGR) is a substrate binding site. ADP contacts are provided by residues 185-187 (GAE), arginine 211, and 213-215 (KKH). Substrate contacts are provided by residues glutamate 222, arginine 243, and 249–252 (HIQR).

Belongs to the phosphofructokinase type A (PFKA) family. ATP-dependent PFK group I subfamily. Prokaryotic clade 'B1' sub-subfamily. In terms of assembly, homotetramer. Mg(2+) serves as cofactor.

Its subcellular location is the cytoplasm. It carries out the reaction beta-D-fructose 6-phosphate + ATP = beta-D-fructose 1,6-bisphosphate + ADP + H(+). It functions in the pathway carbohydrate degradation; glycolysis; D-glyceraldehyde 3-phosphate and glycerone phosphate from D-glucose: step 3/4. Allosterically activated by ADP and other diphosphonucleosides, and allosterically inhibited by phosphoenolpyruvate. Functionally, catalyzes the phosphorylation of D-fructose 6-phosphate to fructose 1,6-bisphosphate by ATP, the first committing step of glycolysis. The sequence is that of ATP-dependent 6-phosphofructokinase from Lysinibacillus sphaericus (Bacillus sphaericus).